A 133-amino-acid polypeptide reads, in one-letter code: Profilin Sal k 4.0301 (133 aa).

A disulfide bridge links cysteine 95 with cysteine 117.

It belongs to the profilin family. In terms of assembly, occurs in many kinds of cells as a complex with monomeric actin in a 1:1 ratio. In terms of tissue distribution, expressed in pollen (at protein and mRNA level).

The protein localises to the cytoplasm. It is found in the cytoskeleton. Binds to actin and affects the structure of the cytoskeleton. At high concentrations, profilin prevents the polymerization of actin, whereas it enhances it at low concentrations. In Kali turgidum (Prickly saltwort), this protein is Profilin Sal k 4.0301.